A 531-amino-acid polypeptide reads, in one-letter code: Polypyrimidine tract-binding protein 2 (531 aa).

The residue at position 1 (Met1) is an N-acetylmethionine. Phosphoserine is present on residues Ser26 and Ser27. RRM domains lie at 59–133 (RVLH…YSNH) and 181–257 (LRII…FSKL). At Ser308 the chain carries Phosphoserine. RRM domains follow at residues 338–412 (TVLL…LSKH) and 455–529 (ATLH…FSKS).

As to quaternary structure, monomer. Interacts with NOVA1; the interaction is direct. Identified in a mRNP complex, at least composed of DHX9, DDX3X, ELAVL1, HNRNPU, IGF2BP1, ILF3, PABPC1, PCBP2, PTBP2, STAU1, STAU2, SYNCRIP and YBX1. Part of a ternary complex containing KHSRP and HNRPH1. Interacts with NOVA2; the interaction is direct. In terms of tissue distribution, mainly expressed in brain although also detected in other tissues like heart and skeletal muscle. Isoform 1 and isoform 2 are specifically expressed in neuronal tissues. Isoform 3 and isoform 4 are expressed in non-neuronal tissues. Isoform 5 and isoform 6 are truncated forms expressed in non-neuronal tissues.

The protein localises to the nucleus. RNA-binding protein which binds to intronic polypyrimidine tracts and mediates negative regulation of exons splicing. May antagonize in a tissue-specific manner the ability of NOVA1 to activate exon selection. In addition to its function in pre-mRNA splicing, plays also a role in the regulation of translation. In terms of biological role, reduced affinity for RNA. This is Polypyrimidine tract-binding protein 2 from Homo sapiens (Human).